The following is a 1094-amino-acid chain: Protein phosphatase 2C and cyclic nucleotide-binding/kinase domain-containing protein (1094 aa).

Positions Arg-107–Ile-397 constitute a PPM-type phosphatase domain. Residues Asp-148, Gly-149, Asp-344, and Asp-388 each contribute to the Mn(2+) site. A nucleoside 3',5'-cyclic phosphate is bound by residues Leu-491 to Asp-616 and Leu-617 to Ser-758. The 254-residue stretch at Thr-785–Phe-1038 folds into the Protein kinase domain. ATP-binding positions include Thr-791–Val-799 and Lys-811.

In the N-terminal section; belongs to the PP2C family. This sequence in the C-terminal section; belongs to the protein kinase superfamily. AGC Ser/Thr protein kinase family. Mg(2+) is required as a cofactor. Mn(2+) serves as cofactor.

It carries out the reaction O-phospho-L-seryl-[protein] + H2O = L-seryl-[protein] + phosphate. The enzyme catalyses O-phospho-L-threonyl-[protein] + H2O = L-threonyl-[protein] + phosphate. The sequence is that of Protein phosphatase 2C and cyclic nucleotide-binding/kinase domain-containing protein from Arabidopsis thaliana (Mouse-ear cress).